Here is a 298-residue protein sequence, read N- to C-terminus: H-2 class I histocompatibility antigen, alpha chain (298 aa).

At 1-244 (RYEPRARWIE…EPPSSTKTNT (244 aa)) the chain is on the extracellular side. Asn43 is a glycosylation site (N-linked (GlcNAc...) asparagine). Cys58 and Cys121 are disulfide-bonded. Asn133 is a glycosylation site (N-linked (GlcNAc...) asparagine). In terms of domain architecture, Ig-like C1-type spans 142–230 (PKAHVTHHRR…EGLPEPLTLR (89 aa)). The cysteines at positions 160 and 216 are disulfide-linked. Residues 245–265 (VIIAVPVVLGAVVILGAVMAF) traverse the membrane as a helical segment. Residues 266–298 (VMKRRRNTGGKGGDYALAPVSQSSDMSLPDCKV) lie on the Cytoplasmic side of the membrane. Positions 277–298 (GGDYALAPVSQSSDMSLPDCKV) are disordered. A phosphoserine mark is found at Ser289 and Ser292.

Belongs to the MHC class I family. As to quaternary structure, heterodimer of an alpha chain and a beta chain (beta-2-microglobulin).

The protein localises to the membrane. Involved in the presentation of foreign antigens to the immune system. This is H-2 class I histocompatibility antigen, alpha chain (H2-D1) from Mus musculus (Mouse).